Here is a 364-residue protein sequence, read N- to C-terminus: Thebaine 6-O-demethylase (364 aa).

One can recognise a Fe2OG dioxygenase domain in the interval 214-314 (GTQAMRMNYY…RLSIATFHDP (101 aa)). Tyr-223 contacts 2-oxoglutarate. Fe cation contacts are provided by His-238, Asp-240, and His-295. Positions 305 and 307 each coordinate 2-oxoglutarate.

Belongs to the iron/ascorbate-dependent oxidoreductase family. The cofactor is L-ascorbate. Requires Fe cation as cofactor. In terms of tissue distribution, mainly expressed in stems and leaves and, to a lower extent, in capsules and roots.

The enzyme catalyses thebaine + 2-oxoglutarate + O2 = neopinone + formaldehyde + succinate + CO2. The catalysed reaction is oripavine + 2-oxoglutarate + O2 = neomorphinone + formaldehyde + succinate + CO2. It catalyses the reaction (S)-canadine + S-adenosyl-L-methionine = (S)-cis-N-methylcanadine + S-adenosyl-L-homocysteine. It carries out the reaction thebaine + 2-oxoglutarate + O2 = 6-O-demethylthebaine + formaldehyde + succinate + CO2 + H(+). The protein operates within alkaloid biosynthesis; morphine biosynthesis. Moderate substrate inhibition. Not inhibited in vitro by acylcyclohexanediones. In terms of biological role, non-heme dioxygenase involved in biosynthesis of morphinan-type benzylisoquinoline and opiate alkaloids natural products. Mediates the conversion of thebaine to neopinone. Also catalyzes, with lower efficiency, the 6-O-demethylation of oripavine to neomorphinone, which is converted spontaneously to morphinone. Supports dealkylation reactions such as O,O-demethylenation in the metabolism of protopine, benzo[c]phenanthridine, and rhoeadine alkaloids; cleaves a methylenedioxy bridge leaving two hydroxyl groups. Catalyzes the O-demethylation of methylenedioxy bridges on protopine alkaloids such as allocryptopine. No activity with (S)-reticuline, salutaridine, papaverine, (S)-corytuberine, (S)-scoulerine, pavine, noscapine or codeine. The sequence is that of Thebaine 6-O-demethylase from Papaver somniferum (Opium poppy).